The following is a 192-amino-acid chain: Phosphoheptose isomerase (192 aa).

Residues 35–192 (LIETLENQGK…CIERHFAHKN (158 aa)) form the SIS domain. 50–52 (NGG) lines the substrate pocket. His59 and Glu63 together coordinate Zn(2+). Substrate contacts are provided by residues Glu63, 92–93 (ND), 118–120 (STS), Ser123, and Gln170. Zn(2+) is bound by residues Gln170 and His178.

Belongs to the SIS family. GmhA subfamily. In terms of assembly, homotetramer. The cofactor is Zn(2+).

The protein localises to the cytoplasm. It catalyses the reaction 2 D-sedoheptulose 7-phosphate = D-glycero-alpha-D-manno-heptose 7-phosphate + D-glycero-beta-D-manno-heptose 7-phosphate. Its pathway is carbohydrate biosynthesis; D-glycero-D-manno-heptose 7-phosphate biosynthesis; D-glycero-alpha-D-manno-heptose 7-phosphate and D-glycero-beta-D-manno-heptose 7-phosphate from sedoheptulose 7-phosphate: step 1/1. It participates in bacterial outer membrane biogenesis; LPS core biosynthesis. Catalyzes the isomerization of sedoheptulose 7-phosphate in D-glycero-D-manno-heptose 7-phosphate. This is Phosphoheptose isomerase from Helicobacter pylori (strain ATCC 700392 / 26695) (Campylobacter pylori).